The primary structure comprises 203 residues: Na(+)-translocating NADH-quinone reductase subunit E (203 aa).

The next 6 helical transmembrane spans lie at 12-32 (AVFV…FLAL), 36-56 (MEAA…TVPV), 82-102 (FLGL…LEMV), 115-135 (GVFL…LFMV), 145-165 (LVYG…LAGI), and 181-201 (LGIT…FSGI).

Belongs to the NqrDE/RnfAE family. In terms of assembly, composed of six subunits; NqrA, NqrB, NqrC, NqrD, NqrE and NqrF.

The protein resides in the cell inner membrane. It catalyses the reaction a ubiquinone + n Na(+)(in) + NADH + H(+) = a ubiquinol + n Na(+)(out) + NAD(+). NQR complex catalyzes the reduction of ubiquinone-1 to ubiquinol by two successive reactions, coupled with the transport of Na(+) ions from the cytoplasm to the periplasm. NqrA to NqrE are probably involved in the second step, the conversion of ubisemiquinone to ubiquinol. This Hahella chejuensis (strain KCTC 2396) protein is Na(+)-translocating NADH-quinone reductase subunit E.